The following is a 214-amino-acid chain: Urease accessory protein UreF (214 aa).

This sequence belongs to the UreF family. UreD, UreF and UreG form a complex that acts as a GTP-hydrolysis-dependent molecular chaperone, activating the urease apoprotein by helping to assemble the nickel containing metallocenter of UreC. The UreE protein probably delivers the nickel.

It is found in the cytoplasm. Required for maturation of urease via the functional incorporation of the urease nickel metallocenter. The polypeptide is Urease accessory protein UreF (Ruegeria sp. (strain TM1040) (Silicibacter sp.)).